A 2322-amino-acid polypeptide reads, in one-letter code: Protein sidekick homolog (2322 aa).

The signal sequence occupies residues 1-26 (MNYRIFLLFCTTTVLWSVVSTQLVLG). Over 27-2020 (KPPIFQNTGP…IPDDPFYTTW (1994 aa)) the chain is Extracellular. 3 Ig-like C2-type domains span residues 28–105 (PPIF…AAIS), 217–319 (PSLQ…AYLT), and 324–397 (PVLK…ADMS). Cystine bridges form between cysteine 52-cysteine 94, cysteine 247-cysteine 301, and cysteine 345-cysteine 386. N-linked (GlcNAc...) asparagine glycosylation occurs at asparagine 408. Ig-like C2-type domains follow at residues 450 to 545 (PFTS…VQVN) and 548 to 639 (SLIE…AMLQ). Disulfide bonds link cysteine 481–cysteine 529 and cysteine 569–cysteine 623. N-linked (GlcNAc...) asparagine glycans are attached at residues asparagine 633 and asparagine 656. Fibronectin type-III domains are found at residues 646-752 (MPER…MPQQ), 757-854 (APRN…TAEG), 859-958 (APKN…TEED), 962-1056 (AVDE…VPPE), 1060-1155 (RPSM…TLQT), 1160-1255 (PSQR…TYES), 1260-1360 (SPRN…TLED), 1364-1458 (PPES…SSVR), 1464-1567 (APAP…TLPS), 1572-1672 (QPIS…VGYS), 1674-1774 (PKRN…LEDK), 1777-1873 (PVGV…SKDG), and 1908-2010 (QAKR…VPES). A disordered region spans residues 732–762 (SNKHGPGKPSLPSSSVTMPQQPPSAAPRNVA). Residues asparagine 808, asparagine 869, asparagine 933, and asparagine 1017 are each glycosylated (N-linked (GlcNAc...) asparagine). Positions 1040–1049 (GDGPVEETKF) are enriched in basic and acidic residues. Residues 1040–1060 (GDGPVEETKFESGVPPELPGR) are disordered. Residue asparagine 1108 is glycosylated (N-linked (GlcNAc...) asparagine). The interval 1139–1163 (GRGAPSEPSRTFETLQTNPETPSQR) is disordered. Over residues 1146-1163 (PSRTFETLQTNPETPSQR) the composition is skewed to polar residues. N-linked (GlcNAc...) asparagine glycans are attached at residues asparagine 1615, asparagine 1677, and asparagine 1864. The tract at residues 1916 to 1965 (EETENGYVSQRPRRNEIRGAKSAAQTSASSNSNRPTHPIGEWITLRPTDG) is disordered. A compositionally biased stretch (low complexity) spans 1935 to 1947 (AKSAAQTSASSNS). The chain crosses the membrane as a helical span at residues 2021-2041 (WFMALVAMAAFVLIVIIIAIL). The Cytoplasmic portion of the chain corresponds to 2042 to 2322 (CVTGSSAKYR…NLTAGFSSFV (281 aa)). 3 disordered regions span residues 2081–2114 (NMTR…SVLG), 2167–2254 (YVVS…ADDI), and 2276–2322 (MVRA…SSFV). The span at 2092–2101 (PGTTQSWLSD) shows a compositional bias: polar residues. The span at 2207–2223 (PSSSGGSQPQGSPQQQQ) shows a compositional bias: low complexity. A compositionally biased stretch (acidic residues) spans 2227-2238 (DSFDEEDDVDDD). Polar residues-rich tracts occupy residues 2282-2302 (LTNQ…STSE) and 2310-2322 (ATPN…SSFV).

The protein belongs to the sidekick family.

It localises to the membrane. Its function is as follows. Cell adhesion protein. This chain is Protein sidekick homolog (rig-4), found in Caenorhabditis briggsae.